Here is a 1334-residue protein sequence, read N- to C-terminus: DNA-directed RNA polymerase subunit beta' (1334 aa).

Zn(2+)-binding residues include Cys213, Cys284, Cys291, and Cys294. The segment covering 1299-1308 (SSRGSSRFSR) has biased composition (low complexity). The disordered stretch occupies residues 1299–1334 (SSRGSSRFSRQPISDRWSEADEEGEEDDFEEDYEEE). Residues 1318 to 1334 (ADEEGEEDDFEEDYEEE) show a composition bias toward acidic residues.

Belongs to the RNA polymerase beta' chain family. RpoC2 subfamily. In terms of assembly, in cyanobacteria the RNAP catalytic core is composed of 2 alpha, 1 beta, 1 beta', 1 gamma and 1 omega subunit. When a sigma factor is associated with the core the holoenzyme is formed, which can initiate transcription. It depends on Zn(2+) as a cofactor.

The enzyme catalyses RNA(n) + a ribonucleoside 5'-triphosphate = RNA(n+1) + diphosphate. Functionally, DNA-dependent RNA polymerase catalyzes the transcription of DNA into RNA using the four ribonucleoside triphosphates as substrates. The polypeptide is DNA-directed RNA polymerase subunit beta' (Microcystis aeruginosa (strain NIES-843 / IAM M-2473)).